Consider the following 71-residue polypeptide: Putative membrane protein insertion efficiency factor (71 aa).

The protein belongs to the UPF0161 family.

It is found in the cell membrane. Could be involved in insertion of integral membrane proteins into the membrane. The polypeptide is Putative membrane protein insertion efficiency factor (Ruminiclostridium cellulolyticum (strain ATCC 35319 / DSM 5812 / JCM 6584 / H10) (Clostridium cellulolyticum)).